The chain runs to 175 residues: Pancreatic beta cell growth factor (175 aa).

An N-terminal signal peptide occupies residues 1 to 26 (MMLPMTLCRMSWMLLSCLMFLSWVEG). The region spanning 38 to 175 (ITCPQGSVAY…ELPYICKFKV (138 aa)) is the C-type lectin domain. Cystine bridges form between C40/C51, C68/C171, and C146/C163.

As to expression, expressed only in CW animals pancreas and to a lesser extent in duodenum. In pancreas it is found in acinar cells, but not in islets.

The protein localises to the secreted. In terms of biological role, constituent of ilotropin, which is a partially purified preparation of cellophane wrapping (CW) pancreata. Capable of initiating duct cell proliferation, a prerequisite for islet neogenesis. This Mesocricetus auratus (Golden hamster) protein is Pancreatic beta cell growth factor (INGAP).